Here is a 158-residue protein sequence, read N- to C-terminus: Small ribosomal subunit protein bS6 (158 aa).

A disordered region spans residues glutamate 98 to asparagine 158. Composition is skewed to basic and acidic residues over residues arginine 106 to phenylalanine 117 and aspartate 127 to arginine 150.

The protein belongs to the bacterial ribosomal protein bS6 family.

Binds together with bS18 to 16S ribosomal RNA. This Acidiphilium cryptum (strain JF-5) protein is Small ribosomal subunit protein bS6.